The primary structure comprises 1399 residues: MKDLLNLLKNQGQVEEFDAIRIGLASPEMIRSWSFGEVKKPETINYRTFKPERDGLFCAKIFGPVKDYECLCGKYKRLKHRGVICEKCGVEVALAKVRRERMAHIELASPVAHIWFLKSLPSRIGLLMDMTLRDIERVLYFESYVVIDPGMTTLEKGQLLNDEQYFEALEEFGDDFDARMGAEAVRELLHAIDLEHEIGRLREEIPQTNSETKIKKLSKRLKLMEAFQGSGNLPEWMVLTVLPVLPPDLRPLVPLDGGRFATSDLNDLYRRVINRNNRLKRLLDLSAPDIIVRNEKRMLQEAVDALLDNGRRGRAITGSNKRPLKSLADMIKGKQGRFRQNLLGKRVDYSGRSVITVGPTLRLHQCGLPKKMALELFKPFIFGKLEMRGLATTIKAAKKMVERELPEVWDVLAEVIREHPVLLNRAPTLHRLGIQAFEPVLIEGKAIQLHPLVCAAYNADFDGDQMAVHVPLTLEAQLEARALMMSTNNILSPANGEPIIVPSQDVVLGLYYMTREAINAKGEGRVFADLQEVDRVFRAGEAALHAKIKVRINETVKDRDGSITKNTRIVDTTVGRALLFQVVPAGLPYDVVNQPMKKKAISKLINQCYRVVGLKETVIFADQLMYTGFAYSTISGVSIGVNDFVIPDEKARIIGSATDEVKEIESQYASGLVTQGEKYNKVIDLWSKANDEVSKAMMANLSKEKVIDREGKEVEQESFNSMYMMADSGARGSAAQIRQLAGMRGLMAKPDGSIIETPITANFREGLSVLQYFISTHGARKGLADTALKTANSGYLTRRLVDVAQDLVVTEIDCGTDHGLLMTPHIEGGDVVEPLGERVLGRVIARDVFKPGTEDVIVPAGTLVDEQWVEFIELNSIDEVVVRSPINCETRYGICAKCYGRDLARGHQVNIGEAVGVIAAQSIGEPGTQLTMRTFHIGGAASRTSAADSVQVKNGGMVRLHNLKQVERADGNLVAVSRSGELAIADEFGRERERYKLPYGAVISVKEGDKVEAGAIVAKWDPHTHPIVTELKGTVTFVGMEENITIKRQTDELTGLTNIEVLDVKDRPAAGKEIRPAIKMVDANGKDLYLPGTDVPAQYFLPANALVGVADGAQIGVGDVIARIPQETSKTRDITGGLPRVADLFEARRPKEASILAEVSGTIAFGKETKGKRRLVITPTDGSDPYEELIPKWRHLNVFEGEQVNRGEVISDGPSDPHDILRLLGVSALAKYIVNEIQDVYRLQGVKINDKHIETILRQMLRKVEISESGDSSFIKGDQMELTQVLVENERLAADDKFVSKFTRVLLGITKASLSTESFISAASFQETTRVLTEAAVTGKRDYLRGLKENVVVGRLIPAGTGLAYHSERKRRRDADKPLRVSASEVEAALTEALNSSGN.

The Zn(2+) site is built by cysteine 70, cysteine 72, cysteine 85, and cysteine 88. 3 residues coordinate Mg(2+): aspartate 460, aspartate 462, and aspartate 464. Zn(2+) contacts are provided by cysteine 814, cysteine 888, cysteine 895, and cysteine 898.

This sequence belongs to the RNA polymerase beta' chain family. In terms of assembly, the RNAP catalytic core consists of 2 alpha, 1 beta, 1 beta' and 1 omega subunit. When a sigma factor is associated with the core the holoenzyme is formed, which can initiate transcription. Requires Mg(2+) as cofactor. Zn(2+) serves as cofactor.

It carries out the reaction RNA(n) + a ribonucleoside 5'-triphosphate = RNA(n+1) + diphosphate. In terms of biological role, DNA-dependent RNA polymerase catalyzes the transcription of DNA into RNA using the four ribonucleoside triphosphates as substrates. The polypeptide is DNA-directed RNA polymerase subunit beta' (Pseudomonas putida (strain W619)).